Here is an 866-residue protein sequence, read N- to C-terminus: N-alpha-acetyltransferase 15, NatA auxiliary subunit (866 aa).

TPR repeat units follow at residues 46-79 (GETL…DLKS), 80-113 (HVCW…DKDN), 148-184 (RASW…SPDK), and 224-257 (LAVE…NPEN). Lys262 is subject to N6-acetyllysine. Residue Ser302 is modified to Phosphoserine. TPR repeat units lie at residues 374–407 (LWVQ…TPTL), 409–441 (ELFL…DTAD), and 485–518 (MWFQ…FIEI). Positions 500 to 866 (KFGEALKKCH…AEAEELANEI (367 aa)) are interaction with HYPK. 2 positions are modified to phosphoserine: Ser537 and Ser588. The segment covering 579 to 594 (EHEADTANMSDKELKK) has biased composition (basic and acidic residues). Residues 579-642 (EHEADTANMS…EEIGGPKEEL (64 aa)) form a disordered region. The span at 595–604 (LRNKQRRAQK) shows a compositional bias: basic residues. Residues 606–621 (AQIEEEKKNAEKEKQQ) show a composition bias toward basic and acidic residues. The short motif at 612–629 (KKNAEKEKQQRNQKKKKD) is the Bipartite nuclear localization signal element. Residues 672 to 705 (IETHLFAFEIYFRKEKFLLMLQSVKRAFAIDSSH) form a TPR 8 repeat. N6-acetyllysine occurs at positions 735 and 756. Phosphoserine occurs at positions 855 and 856.

Component of the N-terminal acetyltransferase A complex (also called the NatA complex) composed of NAA10 and NAA15. Within the complex interacts with NAA10. Component of the N-terminal acetyltransferase A (NatA)/HYPK complex at least composed of NAA10, NAA15 and HYPK, which has N-terminal acetyltransferase activity. In complex with NAA10, interacts with HYPK. Component of the N-terminal acetyltransferase E (NatE) complex at least composed of NAA10, NAA15 and NAA50. Within the complex interacts with NAA10; the interaction is required for binding to NAA50. Interacts with NAAT50. The interaction of the NatA complex with NAA50 reduces the acetylation activity of the NatA complex. Component of the N-terminal acetyltransferase E (NatE)/HYPK complex at least composed of NAA10, NAA15, NAA50 and HYPK. In complex with NAA10 interacts with HYPK; the interaction with HYPK reduces the capacity of the NatA complex to interact with NAA50. Interacts with NAA11. Interacts with XRCC6 and XRCC5. Post-translationally, cleaved by caspases during apoptosis, resulting in a stable 35 kDa fragment. In terms of tissue distribution, expressed at high levels in testis and in ocular endothelial cells. Also found in brain (corpus callosum), heart, colon, bone marrow and at lower levels in most adult tissues, including thyroid, liver, pancreas, mammary and salivary glands, lung, ovary, urogenital system and upper gastrointestinal tract. Overexpressed in gastric cancer, in papillary thyroid carcinomas and in a Burkitt lymphoma cell line (Daudi). Specifically suppressed in abnormal proliferating blood vessels in eyes of patients with proliferative diabetic retinopathy.

The protein localises to the cytoplasm. Its subcellular location is the nucleus. In terms of biological role, auxillary subunit of N-terminal acetyltransferase complexes which display alpha (N-terminal) acetyltransferase (NAT) activity. The NAT activity may be important for vascular, hematopoietic and neuronal growth and development. Required to control retinal neovascularization in adult ocular endothelial cells. In complex with XRCC6 and XRCC5 (Ku80), up-regulates transcription from the osteocalcin promoter. The protein is N-alpha-acetyltransferase 15, NatA auxiliary subunit (NAA15) of Homo sapiens (Human).